A 403-amino-acid polypeptide reads, in one-letter code: Histidine--tRNA ligase (403 aa).

The protein belongs to the class-II aminoacyl-tRNA synthetase family. In terms of assembly, homodimer.

It is found in the cytoplasm. It carries out the reaction tRNA(His) + L-histidine + ATP = L-histidyl-tRNA(His) + AMP + diphosphate + H(+). This is Histidine--tRNA ligase from Sulfurimonas denitrificans (strain ATCC 33889 / DSM 1251) (Thiomicrospira denitrificans (strain ATCC 33889 / DSM 1251)).